Reading from the N-terminus, the 505-residue chain is Maturase K (505 aa).

This sequence belongs to the intron maturase 2 family. MatK subfamily.

It localises to the plastid. The protein resides in the chloroplast. Usually encoded in the trnK tRNA gene intron. Probably assists in splicing its own and other chloroplast group II introns. The chain is Maturase K from Rosa stellata (Star rose).